Consider the following 204-residue polypeptide: Phosphoribosyl-dephospho-CoA transferase (204 aa).

Active-site residues include D129 and D131.

Belongs to the MdcG family.

The enzyme catalyses apo-[malonate decarboxylase ACP] + 2'-(5''-triphospho-alpha-D-ribosyl)-3'-dephospho-CoA = holo-[malonate decarboxylase ACP] + diphosphate. In terms of biological role, transfers 2'-(5-triphosphoribosyl)-3'-dephosphocoenzyme-A to the apo-[acyl-carrier-protein] of the malonate decarboxylase to yield holo-[acyl-carrier-protein]. This is Phosphoribosyl-dephospho-CoA transferase from Pseudomonas putida (strain W619).